The following is a 964-amino-acid chain: SKI family transcriptional corepressor 1 (964 aa).

6 disordered regions span residues 45–72 (TQLGPGREGSSSPNSKQELQPYSGSSAL), 278–365 (RTFS…GGSA), 414–452 (AGEPKGGPGTGSGGGAGTAAGAGGPGAGHLPPGAGPGPG), 525–587 (AGGG…RKSS), 610–766 (REAY…GPAA), and 793–842 (YLCT…EDGL). The span at 283–310 (QGGGGGGANSGSGGAGKGGAGGGGGPGC) shows a compositional bias: gly residues. Positions 345 to 355 (ALGLAAAANGP) are enriched in low complexity. 2 stretches are compositionally biased toward gly residues: residues 356–365 (AGPGGPGGSA) and 417–440 (PKGGPGTGSGGGAGTAAGAGGPGA). Residues 571 to 583 (SLAPLAPPPPPPA) are compositionally biased toward pro residues. Residues 652–661 (DTADEPEVDV) show a composition bias toward acidic residues. Over residues 798-808 (ETHEPDKEDNH) the composition is skewed to basic and acidic residues. Residues 823–834 (DQRSVSQPSPAN) are compositionally biased toward polar residues. The stretch at 857–921 (ENLAREELQK…DTLCNELDQE (65 aa)) forms a coiled coil.

Belongs to the SKI family. Interacts with LBX1. Interacts with SMAD1, SMAD2 and SMAD3.

It localises to the nucleus. In terms of biological role, inhibits BMP signaling. Acts as a transcriptional corepressor of LBX1. The chain is SKI family transcriptional corepressor 1 (Skor1) from Rattus norvegicus (Rat).